The chain runs to 119 residues: Beta-2-microglobulin (119 aa).

The N-terminal stretch at 1–20 (MARFVVVPLFVLLSLFGLEA) is a signal peptide. The Ig-like C1-type domain maps to 25 to 114 (PKIQVYSRYP…VTFSTPKTVK (90 aa)). Residues Cys-45 and Cys-100 are joined by a disulfide bond.

It belongs to the beta-2-microglobulin family. Heterodimer of an alpha chain and a beta chain. Beta-2-microglobulin is the beta-chain of major histocompatibility complex class I molecules.

The protein resides in the secreted. In terms of biological role, component of the class I major histocompatibility complex (MHC). Involved in the presentation of peptide antigens to the immune system. The chain is Beta-2-microglobulin (B2M) from Saguinus niger (Black tamarin).